The sequence spans 1235 residues: UPF0507 protein DEHA2G04334g (1235 aa).

The region spanning 323–487 (QNDDSDAIKI…LSSSMNDEPQ (165 aa)) is the VPS9 domain. The tract at residues 1097-1124 (STTEADTTDTTDATDATHASPNLANSTN) is disordered. The segment covering 1100–1115 (EADTTDTTDATDATHA) has biased composition (low complexity).

It belongs to the UPF0507 family.

The protein is UPF0507 protein DEHA2G04334g of Debaryomyces hansenii (strain ATCC 36239 / CBS 767 / BCRC 21394 / JCM 1990 / NBRC 0083 / IGC 2968) (Yeast).